Reading from the N-terminus, the 122-residue chain is MSITNEQILDAVAEMSVMQVVELIEAMEEKFGVSAAAAVVAGGAAAGAAVEEQTEFDVILESAGGNKVAVIKAVRGATGLGLKEAKALVDGAPAPLKEGVDKAEADALKAQLEEAGATVAVK.

This sequence belongs to the bacterial ribosomal protein bL12 family. In terms of assembly, homodimer. Part of the ribosomal stalk of the 50S ribosomal subunit. Forms a multimeric L10(L12)X complex, where L10 forms an elongated spine to which 2 to 4 L12 dimers bind in a sequential fashion. Binds GTP-bound translation factors.

Functionally, forms part of the ribosomal stalk which helps the ribosome interact with GTP-bound translation factors. Is thus essential for accurate translation. The chain is Large ribosomal subunit protein bL12 from Vibrio parahaemolyticus serotype O3:K6 (strain RIMD 2210633).